The primary structure comprises 361 residues: Peptide chain release factor 1 (361 aa).

Glutamine 235 bears the N5-methylglutamine mark.

The protein belongs to the prokaryotic/mitochondrial release factor family. Post-translationally, methylated by PrmC. Methylation increases the termination efficiency of RF1.

Its subcellular location is the cytoplasm. In terms of biological role, peptide chain release factor 1 directs the termination of translation in response to the peptide chain termination codons UAG and UAA. In Xanthomonas euvesicatoria pv. vesicatoria (strain 85-10) (Xanthomonas campestris pv. vesicatoria), this protein is Peptide chain release factor 1.